The following is a 129-amino-acid chain: Glycine cleavage system H protein (129 aa).

Positions 24-106 (AVRIGLSAYA…HGEGWLLVIQ (83 aa)) constitute a Lipoyl-binding domain. Lysine 65 carries the N6-lipoyllysine modification.

The protein belongs to the GcvH family. The glycine cleavage system is composed of four proteins: P, T, L and H. Requires (R)-lipoate as cofactor.

The glycine cleavage system catalyzes the degradation of glycine. The H protein shuttles the methylamine group of glycine from the P protein to the T protein. The protein is Glycine cleavage system H protein of Synechococcus sp. (strain WH7803).